The sequence spans 1770 residues: Probable outer membrane protein PmpC (1770 aa).

Residues 1 to 20 form the signal peptide; the sequence is MKFMSATAVFAAALSSVTEA. Disordered regions lie at residues 73–109, 264–311, 481–505, 611–818, and 1271–1329; these read LPRK…ELDN, EDTL…GKGG, PAAP…TNSD, ESTP…STTE, and LRII…TSRT. Residues 85–97 show a composition bias toward low complexity; the sequence is SPTTEGVSSSSSG. Residues 268 to 285 show a composition bias toward polar residues; it reads DSTPETEQTESNGNQDGS. 2 stretches are compositionally biased toward low complexity: residues 294 to 303 and 496 to 505; these read SESPESTPSP and QTETSDTNSD. 2 stretches are compositionally biased toward polar residues: residues 631 to 675 and 682 to 703; these read TEDP…TGNA and QDST…QSNE. 2 stretches are compositionally biased toward low complexity: residues 719–748 and 762–802; these read ESVS…GDQS and STDS…GDSA. The span at 1303–1319 shows a compositional bias: polar residues; it reads NNDASNQGESANGSSSP. Positions 1477–1770 constitute an Autotransporter domain; it reads EEVSYNNLWI…MMNCGARMTF (294 aa).

This sequence belongs to the PMP outer membrane protein family.

It is found in the secreted. The protein localises to the cell wall. It localises to the cell outer membrane. The protein is Probable outer membrane protein PmpC (pmpC) of Chlamydia trachomatis serovar D (strain ATCC VR-885 / DSM 19411 / UW-3/Cx).